Consider the following 289-residue polypeptide: ATP synthase gamma chain (289 aa).

The protein belongs to the ATPase gamma chain family. In terms of assembly, F-type ATPases have 2 components, CF(1) - the catalytic core - and CF(0) - the membrane proton channel. CF(1) has five subunits: alpha(3), beta(3), gamma(1), delta(1), epsilon(1). CF(0) has three main subunits: a, b and c.

The protein resides in the cell inner membrane. In terms of biological role, produces ATP from ADP in the presence of a proton gradient across the membrane. The gamma chain is believed to be important in regulating ATPase activity and the flow of protons through the CF(0) complex. The sequence is that of ATP synthase gamma chain from Aromatoleum aromaticum (strain DSM 19018 / LMG 30748 / EbN1) (Azoarcus sp. (strain EbN1)).